Here is a 2071-residue protein sequence, read N- to C-terminus: GTPase-activating protein BEM2 (2071 aa).

2 disordered regions span residues 1–115 and 171–195; these read MPLK…QAHK and AAPAREGRYSHQPTASLSSIGSERP. Low complexity-rich tracts occupy residues 16–31 and 42–55; these read PQSCASKPSSASQSSC and SSISSNSSPNSKNN. Residues 62 to 80 are compositionally biased toward polar residues; it reads SNGSVYSDETTLKTAQTHY. The span at 81–110 shows a compositional bias: low complexity; it reads TQQGQQAKPQQHTQQQQQQPQTPMQLQVPT. A compositionally biased stretch (polar residues) spans 181–191; it reads HQPTASLSSIG. One can recognise a Ras-GEF domain in the interval 471 to 738; the sequence is DTEKVANQIH…MEMSLKMEPP (268 aa). Residues 787 to 811 show a composition bias toward polar residues; that stretch reads PSTKNNNSSQASNRISQLSVNSTPH. Disordered regions lie at residues 787 to 819, 1645 to 1676, and 1702 to 1738; these read PSTKNNNSSQASNRISQLSVNSTPHSNASSSSA, RSVLIQHPNKVSVSSASSSVSGSSSGSTARTS, and SVSSRSSVISNTATATSPASGASPNQTSTSHHGGMGK. 2 stretches are compositionally biased toward low complexity: residues 1656–1676 and 1702–1726; these read SVSSASSSVSGSSSGSTARTS and SVSSRSSVISNTATATSPASGASPN. In terms of domain architecture, PH spans 1751 to 1853; it reads SGFTSSSSQY…WMKAITLSKR (103 aa). In terms of domain architecture, Rho-GAP spans 1872–2070; it reads VPVEDVCERE…HLIRNPEHYF (199 aa).

Functionally, GTPase-activating protein (GAP) for RHO proteins. Required for polarized growth and maintenance of cell polarity. The polypeptide is GTPase-activating protein BEM2 (BEM2) (Eremothecium gossypii (strain ATCC 10895 / CBS 109.51 / FGSC 9923 / NRRL Y-1056) (Yeast)).